Reading from the N-terminus, the 433-residue chain is Phosphoribosylamine--glycine ligase (433 aa).

Positions 110–317 constitute an ATP-grasp domain; the sequence is RNFMKKYGIE…FVDIMSAVVK (208 aa). 137 to 194 is a binding site for ATP; it reads IEKLGDVAVKPSGLTGGKGVKVMGDQLPDLKAAKAYTSELLEKGSVVIEERFIGEEFT. The Mg(2+) site is built by glutamine 275, glutamate 287, and asparagine 289. 3 residues coordinate Mn(2+): glutamine 275, glutamate 287, and asparagine 289.

It belongs to the GARS family. Mg(2+) is required as a cofactor. The cofactor is Mn(2+).

The enzyme catalyses 5-phospho-beta-D-ribosylamine + glycine + ATP = N(1)-(5-phospho-beta-D-ribosyl)glycinamide + ADP + phosphate + H(+). The protein operates within purine metabolism; IMP biosynthesis via de novo pathway; N(1)-(5-phospho-D-ribosyl)glycinamide from 5-phospho-alpha-D-ribose 1-diphosphate: step 2/2. This chain is Phosphoribosylamine--glycine ligase, found in Methanosarcina barkeri (strain Fusaro / DSM 804).